Consider the following 365-residue polypeptide: Glucan endo-1,3-beta-glucosidase, basic vacuolar isoform (365 aa).

Residues 1–32 form the signal peptide; the sequence is MSTLHKHNTPQMAAITLLGLLLVASSIEIAGA. E128 serves as the catalytic Proton donor. E273 functions as the Nucleophile in the catalytic mechanism. The propeptide at 349-365 is removed in mature form; that stretch reads VSGSVETNATASLISEI. The N-linked (GlcNAc...) asparagine glycan is linked to N356.

The protein belongs to the glycosyl hydrolase 17 family.

Its subcellular location is the vacuole. It catalyses the reaction Hydrolysis of (1-&gt;3)-beta-D-glucosidic linkages in (1-&gt;3)-beta-D-glucans.. Its function is as follows. Implicated in the defense of plants against pathogens. In Nicotiana plumbaginifolia (Leadwort-leaved tobacco), this protein is Glucan endo-1,3-beta-glucosidase, basic vacuolar isoform (GN2).